The chain runs to 965 residues: Valine--tRNA ligase (965 aa).

The segment covering M1–E12 has biased composition (polar residues). Positions M1–E23 are disordered. Positions P56 to H66 match the 'HIGH' region motif. A 'KMSKS' region motif is present at residues K568–S572. Position 571 (K571) interacts with ATP. A coiled-coil region spans residues M893–E960.

This sequence belongs to the class-I aminoacyl-tRNA synthetase family. ValS type 1 subfamily. In terms of assembly, monomer.

It is found in the cytoplasm. The enzyme catalyses tRNA(Val) + L-valine + ATP = L-valyl-tRNA(Val) + AMP + diphosphate. Catalyzes the attachment of valine to tRNA(Val). As ValRS can inadvertently accommodate and process structurally similar amino acids such as threonine, to avoid such errors, it has a 'posttransfer' editing activity that hydrolyzes mischarged Thr-tRNA(Val) in a tRNA-dependent manner. This chain is Valine--tRNA ligase, found in Photorhabdus laumondii subsp. laumondii (strain DSM 15139 / CIP 105565 / TT01) (Photorhabdus luminescens subsp. laumondii).